The following is a 281-amino-acid chain: MTTTRAKSKFQSLSACRFTPLPEPNTSPSTYSKTLPKPNSSPGTDGTFPTPFPLAVITPIKTLKSVTLSDWWLTKKGKDLCIKGFESNGASGVRLFSSGTISKRHESTTLEAIDGITISINGFINRSRCLENGISIEVCNRFRLGFPYDWEDYNEEEEEKKKKNVDISFDDIPVNRYQDLYSLEGCLKDKILDDVVGSLRDLVCQKSDKACEKSRVGDVDDDDDDDDDKSLVSRVVGVKTRGMLRRREEYEASIGKRVATMSGKRVVTVSKKKNRRRSFGW.

Composition is skewed to polar residues over residues Met1–Ser14 and Pro24–Ser41. Residues Met1–Thr47 are disordered. The SANTA domain maps to Val66 to Tyr153.

In terms of biological role, required for normal embryo development. In Arabidopsis thaliana (Mouse-ear cress), this protein is Protein EMBRYO DEFECTIVE 1674.